The primary structure comprises 245 residues: DNA polymerase sliding clamp 1 (245 aa).

It belongs to the PCNA family. In terms of assembly, homotrimer. The subunits circularize to form a toroid; DNA passes through its center. Replication factor C (RFC) is required to load the toroid on the DNA.

Functionally, sliding clamp subunit that acts as a moving platform for DNA processing. Responsible for tethering the catalytic subunit of DNA polymerase and other proteins to DNA during high-speed replication. This Sulfurisphaera ohwakuensis protein is DNA polymerase sliding clamp 1.